A 394-amino-acid chain; its full sequence is Ornithine aminotransferase 1 (394 aa).

K252 bears the N6-(pyridoxal phosphate)lysine mark.

It belongs to the class-III pyridoxal-phosphate-dependent aminotransferase family. OAT subfamily. Pyridoxal 5'-phosphate is required as a cofactor.

The protein localises to the cytoplasm. The enzyme catalyses a 2-oxocarboxylate + L-ornithine = L-glutamate 5-semialdehyde + an L-alpha-amino acid. It participates in amino-acid biosynthesis; L-proline biosynthesis; L-glutamate 5-semialdehyde from L-ornithine: step 1/1. Its function is as follows. Catalyzes the interconversion of ornithine to glutamate semialdehyde. The chain is Ornithine aminotransferase 1 from Staphylococcus aureus (strain MRSA252).